The sequence spans 327 residues: Thiamine-monophosphate kinase (327 aa).

Mg(2+) is bound by residues Asp30, Ser45, Ser46, and Asp47. His54 serves as a coordination point for substrate. Asp76 contacts Mg(2+). Residues Tyr106, 123 to 124, and Arg149 contribute to the ATP site; that span reads GD. Asp124 contributes to the Mg(2+) binding site. Asp221 contacts Mg(2+). Ser223 provides a ligand contact to ATP. Asp224 contacts Mg(2+). Substrate is bound by residues Glu268 and Phe321.

Belongs to the thiamine-monophosphate kinase family.

It catalyses the reaction thiamine phosphate + ATP = thiamine diphosphate + ADP. It functions in the pathway cofactor biosynthesis; thiamine diphosphate biosynthesis; thiamine diphosphate from thiamine phosphate: step 1/1. Catalyzes the ATP-dependent phosphorylation of thiamine-monophosphate (TMP) to form thiamine-pyrophosphate (TPP), the active form of vitamin B1. This chain is Thiamine-monophosphate kinase, found in Synechococcus elongatus (strain ATCC 33912 / PCC 7942 / FACHB-805) (Anacystis nidulans R2).